Consider the following 87-residue polypeptide: Small ribosomal subunit protein bS18B (87 aa).

Belongs to the bacterial ribosomal protein bS18 family. As to quaternary structure, part of the 30S ribosomal subunit. Forms a tight heterodimer with protein bS6.

Its function is as follows. Binds as a heterodimer with protein bS6 to the central domain of the 16S rRNA, where it helps stabilize the platform of the 30S subunit. The polypeptide is Small ribosomal subunit protein bS18B (Mycobacterium marinum (strain ATCC BAA-535 / M)).